Here is a 310-residue protein sequence, read N- to C-terminus: Olfactory receptor 10N1 (310 aa).

The Extracellular segment spans residues 1-23 (MDNYTLLNEFILLGIPQTQGLET). N3 is a glycosylation site (N-linked (GlcNAc...) asparagine). The chain crosses the membrane as a helical span at residues 24–44 (LLFVVFLFIYFFTLLGNSLIF). Residues 45–55 (TAIISSSTLHT) are Cytoplasmic-facing. Residues 56–76 (PMYFFLGLLSVFDMLFPSVTC) form a helical membrane-spanning segment. Residues 77–95 (PKMLFYLSVRSPAISYKGC) are Extracellular-facing. A disulfide bridge connects residues C95 and C187. The helical transmembrane segment at 96 to 116 (AAQLFFYHLLGSTEGCLYSVM) threads the bilayer. The Cytoplasmic segment spans residues 117 to 136 (AYDRYVAICHPLRYMLIMKP). A helical transmembrane segment spans residues 137-157 (GVCVSLVIIAWLVGCLHATIL). Residues 158–202 (TSLTFQLVYCASNQVDYFFCDLPAVLPLACTDSKLARKVGSINVG) lie on the Extracellular side of the membrane. The chain crosses the membrane as a helical span at residues 203–223 (FLALMLLFSVCVSYVHIGVAI). Residues 224–237 (LRIRSAEGRQKAFS) lie on the Cytoplasmic side of the membrane. The chain crosses the membrane as a helical span at residues 238-258 (TCSAHLTAILCAYGPVIIIYL). Residues 259–264 (QRTPNP) are Extracellular-facing. Residues 265–285 (LLGAVVQILNNIVSPMLNSLI) traverse the membrane as a helical segment. Over 286 to 310 (YSLRNKEVKRSLRRVFQNITFHGQK) the chain is Cytoplasmic.

It belongs to the G-protein coupled receptor 1 family.

The protein resides in the cell membrane. In terms of biological role, odorant receptor. The chain is Olfactory receptor 10N1 from Mus musculus (Mouse).